The primary structure comprises 204 residues: Tumor protein D53 (204 aa).

A disordered region spans residues 1 to 31 (MEAQAQGLLETEPLQGRDGDAVGSADFSSML). The stretch at 22 to 73 (VGSADFSSMLSEEEKEELKAELIQLEDEITTLRQVLSAKERHLVEIKQKLGM) forms a coiled coil. Phosphoserine is present on residues S29, S86, S122, and S131. R133 is modified (omega-N-methylarginine). T146 carries the phosphothreonine modification. 2 positions are modified to phosphoserine: S149 and S174. Positions 164-204 (KVGGTNHGGGSFEEVLNSTAHASSQNASAGSRQTKDEELQC) are disordered. A compositionally biased stretch (polar residues) spans 179-195 (LNSTAHASSQNASAGSR).

It belongs to the TPD52 family. Forms a homodimer or heterodimer with other members of the family.

This is Tumor protein D53 (Tpd52l1) from Mus musculus (Mouse).